Reading from the N-terminus, the 161-residue chain is Regulator of ribonuclease activity A (161 aa).

The protein belongs to the RraA family. Homotrimer. Binds to both RNA-binding sites in the C-terminal region of Rne and to RhlB.

It localises to the cytoplasm. In terms of biological role, globally modulates RNA abundance by binding to RNase E (Rne) and regulating its endonucleolytic activity. Can modulate Rne action in a substrate-dependent manner by altering the composition of the degradosome. Modulates RNA-binding and helicase activities of the degradosome. The polypeptide is Regulator of ribonuclease activity A (Escherichia fergusonii (strain ATCC 35469 / DSM 13698 / CCUG 18766 / IAM 14443 / JCM 21226 / LMG 7866 / NBRC 102419 / NCTC 12128 / CDC 0568-73)).